Consider the following 228-residue polypeptide: PKHD-type hydroxylase Reut_A2877 (228 aa).

The Fe2OG dioxygenase domain occupies 80-180 (IVYPPMFNRY…RVASFFWIQS (101 aa)). Fe cation-binding residues include H98, D100, and H161. Residue R171 coordinates 2-oxoglutarate.

Fe(2+) is required as a cofactor. It depends on L-ascorbate as a cofactor.

The chain is PKHD-type hydroxylase Reut_A2877 from Cupriavidus pinatubonensis (strain JMP 134 / LMG 1197) (Cupriavidus necator (strain JMP 134)).